We begin with the raw amino-acid sequence, 95 residues long: Secretoglobin family 1C member 1 (95 aa).

Positions 1 to 23 (MKGSSALLLVALSLLCVCGLTRA) are cleaved as a signal peptide.

The protein belongs to the secretoglobin family.

The protein resides in the secreted. This chain is Secretoglobin family 1C member 1 (Scgb1c1), found in Mus musculus (Mouse).